Reading from the N-terminus, the 225-residue chain is Germin-like protein 8-7 (225 aa).

A signal peptide spans M1 to A23. A disulfide bridge links C33 with C48. In terms of domain architecture, Cupin type-1 spans A63 to D213. A glycan (N-linked (GlcNAc...) asparagine) is linked at N77. Mn(2+) contacts are provided by H110, H112, and E117. N-linked (GlcNAc...) asparagine glycosylation occurs at N136. H158 is a Mn(2+) binding site.

Belongs to the germin family. Oligomer (believed to be a pentamer but probably hexamer).

Its subcellular location is the secreted. The protein localises to the extracellular space. It localises to the apoplast. Its function is as follows. Plays a role in broad-spectrum disease resistance. Probably has no oxalate oxidase activity even if the active site is conserved. This is Germin-like protein 8-7 (GER6) from Oryza sativa subsp. japonica (Rice).